A 424-amino-acid chain; its full sequence is UDP-N-acetylglucosamine 1-carboxyvinyltransferase (424 aa).

Residue lysine 22–asparagine 23 participates in phosphoenolpyruvate binding. Residue arginine 93 coordinates UDP-N-acetyl-alpha-D-glucosamine. Cysteine 117 acts as the Proton donor in catalysis. Cysteine 117 is subject to 2-(S-cysteinyl)pyruvic acid O-phosphothioketal. UDP-N-acetyl-alpha-D-glucosamine is bound by residues lysine 162–valine 165, aspartate 307, and isoleucine 329.

Belongs to the EPSP synthase family. MurA subfamily.

The protein localises to the cytoplasm. The catalysed reaction is phosphoenolpyruvate + UDP-N-acetyl-alpha-D-glucosamine = UDP-N-acetyl-3-O-(1-carboxyvinyl)-alpha-D-glucosamine + phosphate. Its pathway is cell wall biogenesis; peptidoglycan biosynthesis. Cell wall formation. Adds enolpyruvyl to UDP-N-acetylglucosamine. The sequence is that of UDP-N-acetylglucosamine 1-carboxyvinyltransferase from Actinobacillus pleuropneumoniae serotype 7 (strain AP76).